A 265-amino-acid chain; its full sequence is Transcription factor BHLH089 (265 aa).

Residues 1–132 (MDPAPTLAAE…PPPPEPPKQD (132 aa)) are disordered. Gly residues-rich tracts occupy residues 17–29 (LGGG…GGRG) and 44–53 (SRGGGGGGGA). Residues 95–105 (SKSSGDNSSLR) are compositionally biased toward polar residues. A basic motif; degenerate region spans residues 142 to 155 (QATDSHSLAERARR). The region spanning 142 to 192 (QATDSHSLAERARREKISERMKILQDLVPGCNKVIGKASVLDEIINYIQAL) is the bHLH domain. The helix-loop-helix motif stretch occupies residues 156–192 (EKISERMKILQDLVPGCNKVIGKASVLDEIINYIQAL).

It belongs to the bHLH protein family. In terms of assembly, interacts with RSS3.

Its subcellular location is the nucleus. Functionally, transcription factor that may regulate jasmonate-regulated genes. This is Transcription factor BHLH089 from Oryza sativa subsp. japonica (Rice).